The primary structure comprises 1140 residues: TBC1 domain family member 8 (1140 aa).

GRAM domains follow at residues 145-212 (VKFE…ERTS) and 285-353 (EFFR…EKME). The region spanning 505 to 692 (GIPESLRGRL…NVVDCFFYDG (188 aa)) is the Rab-GAP TBC domain. The disordered stretch occupies residues 1031 to 1070 (GQRGSSSGSCSQECGEELRASAPSPEDSVFADTGKTPQDS). Positions 1032 to 1043 (QRGSSSGSCSQE) are enriched in low complexity.

May act as a GTPase-activating protein for Rab family protein(s). This Homo sapiens (Human) protein is TBC1 domain family member 8 (TBC1D8).